The following is a 131-amino-acid chain: Translation initiation factor 5A (131 aa).

Hypusine is present on lysine 37.

It belongs to the eIF-5A family.

The protein localises to the cytoplasm. In terms of biological role, functions by promoting the formation of the first peptide bond. The polypeptide is Translation initiation factor 5A (Methanococcus maripaludis (strain DSM 14266 / JCM 13030 / NBRC 101832 / S2 / LL)).